The chain runs to 298 residues: ATP synthase gamma chain (298 aa).

The protein belongs to the ATPase gamma chain family. In terms of assembly, F-type ATPases have 2 components, CF(1) - the catalytic core - and CF(0) - the membrane proton channel. CF(1) has five subunits: alpha(3), beta(3), gamma(1), delta(1), epsilon(1). CF(0) has three main subunits: a, b and c.

The protein resides in the cell inner membrane. Its function is as follows. Produces ATP from ADP in the presence of a proton gradient across the membrane. The gamma chain is believed to be important in regulating ATPase activity and the flow of protons through the CF(0) complex. The chain is ATP synthase gamma chain from Zymomonas mobilis subsp. mobilis (strain ATCC 31821 / ZM4 / CP4).